The chain runs to 134 residues: Large ribosomal subunit protein eL32 (134 aa).

Belongs to the eukaryotic ribosomal protein eL32 family.

The polypeptide is Large ribosomal subunit protein eL32 (RpL32) (Spodoptera frugiperda (Fall armyworm)).